The chain runs to 338 residues: Putative transposase for insertion sequence element IS4SA (338 aa).

This sequence belongs to the transposase 11 family.

The protein is Putative transposase for insertion sequence element IS4SA of Synechocystis sp. (strain ATCC 27184 / PCC 6803 / Kazusa).